The chain runs to 718 residues: MKQLFATTSRGFEELLKVELTDLGAQECRVVQGGVHFIANDETQYRILLWSRLSSRILLPLITTKIYSDLDLYSAIVGQNWLTHFDERVTFLVDFNGTNREIRHTQFGAMRVKDGIVDYFERHGKTRPNVDKEYPDIRIHAYLNQDELVVSLDLSGEALHLRGYREDTGKAPLRETLAAAIVLRSSWEKGTPLVDPMCGSGTLLIEAAQMEAQIAPQLHRLHWGFDFWKGHNQVVWEKVKQEAVELAEQAFNRKLTPHFWGFDLDHRVLKKAQKNAQNAGVSHLIKWQQGDVAGLKNPTEQEIGTVICNPPYGERLGTTPALIALYSVFGRQLKTEFADWNVSIFSGEPALLDCLRLRAYRQFKAKNGPLDCVQKNYHIAVRKQVESAVENSQEKTLTFVSENTQVAQDFANRLRKNIKKIDKWANQQKLDAYRLYDADLPEYNLAVDRYADHIIVQEYAAPKNVDENKARQRLLDAVSAILLVTGIETNKLILKVRQKQKGTSQYEKLANKGEYFYVHEYGAKLWVNLTDYLDTGLFLDHRLTRKMLGEMAVGKDFLNLFAYTGSATVHAALGLAKSTTTVDMSNTYLNWAEQNLLLNDIEGKQHKLIQADCLQWLNKCDRQFDLIFVDPPTFSNSKRMEDSWDVQRDHIKLMANLKRILRTNGTIVFSNNKRGFKMDIDGLQELELSAVEISAKTLPLDFERNKQIHNCWIIRHQS.

In terms of domain architecture, THUMP spans 43 to 154; that stretch reads TQYRILLWSR…QDELVVSLDL (112 aa).

This sequence belongs to the methyltransferase superfamily. RlmKL family.

Its subcellular location is the cytoplasm. It carries out the reaction guanosine(2445) in 23S rRNA + S-adenosyl-L-methionine = N(2)-methylguanosine(2445) in 23S rRNA + S-adenosyl-L-homocysteine + H(+). It catalyses the reaction guanosine(2069) in 23S rRNA + S-adenosyl-L-methionine = N(2)-methylguanosine(2069) in 23S rRNA + S-adenosyl-L-homocysteine + H(+). Functionally, specifically methylates the guanine in position 2445 (m2G2445) and the guanine in position 2069 (m7G2069) of 23S rRNA. The chain is Ribosomal RNA large subunit methyltransferase K/L from Histophilus somni (strain 129Pt) (Haemophilus somnus).